A 264-amino-acid polypeptide reads, in one-letter code: Vitellin-degrading protease (264 aa).

A signal peptide spans 1–15; that stretch reads MTNSLLICFTILGLA. The propeptide at 16–27 is activation peptide; the sequence is ASSPTKPIGDIR. Residues 28–253 enclose the Peptidase S1 domain; sequence IVGGEDIVIT…LREWVDENIT (226 aa). Cys53 and Cys69 form a disulfide bridge. Active-site charge relay system residues include His68 and Asp113. Cys178 and Cys194 are joined by a disulfide. Asp203 contributes to the substrate binding site. Cys205 and Cys229 are oxidised to a cystine. Ser209 serves as the catalytic Charge relay system. A glycan (N-linked (GlcNAc...) asparagine) is linked at Asn251.

Belongs to the peptidase S1 family. Post-translationally, cleavage after Arg-27 leads to beta-VTN protease and subsequent cleavage after Arg-89 leads to alpha-VTN.

Its function is as follows. Responsible for the degradation of vitellin in eggs at the head pigmentation stage. This Bombyx mori (Silk moth) protein is Vitellin-degrading protease.